The sequence spans 427 residues: Enolase (427 aa).

Position 163 (Q163) interacts with (2R)-2-phosphoglycerate. E205 acts as the Proton donor in catalysis. Residues D242, E287, and D314 each contribute to the Mg(2+) site. 4 residues coordinate (2R)-2-phosphoglycerate: K339, R368, S369, and K390. K339 serves as the catalytic Proton acceptor.

This sequence belongs to the enolase family. Mg(2+) serves as cofactor.

The protein localises to the cytoplasm. It localises to the secreted. The protein resides in the cell surface. The enzyme catalyses (2R)-2-phosphoglycerate = phosphoenolpyruvate + H2O. It functions in the pathway carbohydrate degradation; glycolysis; pyruvate from D-glyceraldehyde 3-phosphate: step 4/5. In terms of biological role, catalyzes the reversible conversion of 2-phosphoglycerate (2-PG) into phosphoenolpyruvate (PEP). It is essential for the degradation of carbohydrates via glycolysis. The chain is Enolase from Solibacter usitatus (strain Ellin6076).